The sequence spans 230 residues: Cytidylate kinase (230 aa).

An ATP-binding site is contributed by 16–24; sequence GPASAGKST.

It belongs to the cytidylate kinase family. Type 1 subfamily.

It is found in the cytoplasm. It carries out the reaction CMP + ATP = CDP + ADP. The enzyme catalyses dCMP + ATP = dCDP + ADP. The polypeptide is Cytidylate kinase (Lactobacillus gasseri (strain ATCC 33323 / DSM 20243 / BCRC 14619 / CIP 102991 / JCM 1131 / KCTC 3163 / NCIMB 11718 / NCTC 13722 / AM63)).